Reading from the N-terminus, the 268-residue chain is tRNA pseudouridine synthase A (268 aa).

Residue Asp52 is the Nucleophile of the active site. Tyr110 is a substrate binding site.

Belongs to the tRNA pseudouridine synthase TruA family. In terms of assembly, homodimer.

It carries out the reaction uridine(38/39/40) in tRNA = pseudouridine(38/39/40) in tRNA. Its function is as follows. Formation of pseudouridine at positions 38, 39 and 40 in the anticodon stem and loop of transfer RNAs. This Prochlorococcus marinus subsp. pastoris (strain CCMP1986 / NIES-2087 / MED4) protein is tRNA pseudouridine synthase A.